A 95-amino-acid chain; its full sequence is MQITDVRIRKITSEGKMKAIVSVTFDNEFVVHDIKVIEGQNGLFIAMPSRKTPDGEFKDIAHPINTATREKIQSAILAEYEKVKNEEETKTETEE.

It belongs to the SpoVG family.

Functionally, could be involved in septation. The chain is Putative septation protein SpoVG from Clostridium acetobutylicum (strain ATCC 824 / DSM 792 / JCM 1419 / IAM 19013 / LMG 5710 / NBRC 13948 / NRRL B-527 / VKM B-1787 / 2291 / W).